The primary structure comprises 322 residues: Tetraacyldisaccharide 4'-kinase (322 aa).

40-47 (CVGGTGKT) contacts ATP.

The protein belongs to the LpxK family.

It catalyses the reaction a lipid A disaccharide + ATP = a lipid IVA + ADP + H(+). It functions in the pathway glycolipid biosynthesis; lipid IV(A) biosynthesis; lipid IV(A) from (3R)-3-hydroxytetradecanoyl-[acyl-carrier-protein] and UDP-N-acetyl-alpha-D-glucosamine: step 6/6. Functionally, transfers the gamma-phosphate of ATP to the 4'-position of a tetraacyldisaccharide 1-phosphate intermediate (termed DS-1-P) to form tetraacyldisaccharide 1,4'-bis-phosphate (lipid IVA). This is Tetraacyldisaccharide 4'-kinase from Koribacter versatilis (strain Ellin345).